We begin with the raw amino-acid sequence, 299 residues long: HTH-type transcriptional regulator CrgA (299 aa).

The region spanning 1–60 (MKTNSEELTVFVQVVESGSFSRAAEQLAMANSAVSRIVKRLEEKLGVNLLNRTTRQLSLT) is the HTH lysR-type domain. The segment at residues 20–39 (FSRAAEQLAMANSAVSRIVK) is a DNA-binding region (H-T-H motif).

It belongs to the LysR transcriptional regulatory family. In terms of assembly, forms oligomers. Oligomerization is required for DNA binding.

Functionally, involved in the regulation of bacterial adhesion to host epithelial cells. May play a central regulatory role in meningococcal adhesion, particularly in switching from initial adhesion to intimate adhesion by downregulating the bacterial surface structures that hinder this adhesion. During intimate adhesion, negatively regulates the expression of pilC1, encoding a pilus-associated protein, pilE, encoding the pilin, and sia genes, encoding the capsule. Also negatively regulates its own expression. May also regulate other genes that are involved in intimate adhesion. Binds specifically to the promoter region of pilC1 and crgA (both harboring a CREN element), and pilE and sia (both devoid of a CREN element). Acts through interaction with RNA polymerase (RNAP). Interaction with RNAP leads to the production of short abortive transcripts, suggesting that CrgA may act by preventing RNAP from clearing the promoter. This Neisseria meningitidis serogroup C (strain 8013) protein is HTH-type transcriptional regulator CrgA.